The following is a 311-amino-acid chain: Purine nucleoside phosphorylase (311 aa).

Ser-2 is subject to N-acetylserine. Phosphate-binding positions include Ser-46, His-81, 101–103 (RLH), and Ala-134. Glu-219 is an a purine D-ribonucleoside binding site. Ser-238 provides a ligand contact to phosphate. Residue Asn-261 coordinates a purine D-ribonucleoside. Residue Ser-275 is modified to Phosphoserine.

It belongs to the PNP/MTAP phosphorylase family.

It carries out the reaction a purine D-ribonucleoside + phosphate = a purine nucleobase + alpha-D-ribose 1-phosphate. Its pathway is purine metabolism; purine nucleoside salvage. In terms of biological role, the purine nucleoside phosphorylases catalyze the phosphorolytic breakdown of the N-glycosidic bond in the beta-(deoxy)ribonucleoside molecules, with the formation of the corresponding free purine bases and pentose-1-phosphate. Cleaves guanosine and inosine. This is Purine nucleoside phosphorylase (PNP1) from Saccharomyces cerevisiae (strain ATCC 204508 / S288c) (Baker's yeast).